A 393-amino-acid polypeptide reads, in one-letter code: Branched-chain-amino-acid aminotransferase, mitochondrial (393 aa).

A mitochondrion-targeting transit peptide spans 1 to 27 (MATAALRQIWIPRFLPVPWFLCGSRRY). Tyr169 provides a ligand contact to substrate. N6-(pyridoxal phosphate)lysine is present on Lys230. Lys322 bears the N6-acetyllysine mark.

Belongs to the class-IV pyridoxal-phosphate-dependent aminotransferase family. In terms of assembly, homodimer. Pyridoxal 5'-phosphate is required as a cofactor.

It is found in the mitochondrion. The enzyme catalyses L-leucine + 2-oxoglutarate = 4-methyl-2-oxopentanoate + L-glutamate. It carries out the reaction L-isoleucine + 2-oxoglutarate = (S)-3-methyl-2-oxopentanoate + L-glutamate. It catalyses the reaction L-valine + 2-oxoglutarate = 3-methyl-2-oxobutanoate + L-glutamate. Catalyzes the first reaction in the catabolism of the essential branched chain amino acids leucine, isoleucine, and valine. May also function as a transporter of branched chain alpha-keto acids. The sequence is that of Branched-chain-amino-acid aminotransferase, mitochondrial (BCAT2) from Bos taurus (Bovine).